The primary structure comprises 380 residues: 1-deoxy-D-xylulose 5-phosphate reductoisomerase (380 aa).

Thr10, Gly11, Ser12, Ile13, Gly35, and Asn121 together coordinate NADPH. Lys122 is a binding site for 1-deoxy-D-xylulose 5-phosphate. Glu123 is a binding site for NADPH. Residue Asp147 coordinates Mn(2+). Residues Ser148, Glu149, Ser173, and His196 each contribute to the 1-deoxy-D-xylulose 5-phosphate site. Glu149 contacts Mn(2+). Gly202 serves as a coordination point for NADPH. 1-deoxy-D-xylulose 5-phosphate contacts are provided by Ser209, Asn214, Lys215, and Glu218. Residue Glu218 coordinates Mn(2+).

This sequence belongs to the DXR family. It depends on Mg(2+) as a cofactor. Requires Mn(2+) as cofactor.

The enzyme catalyses 2-C-methyl-D-erythritol 4-phosphate + NADP(+) = 1-deoxy-D-xylulose 5-phosphate + NADPH + H(+). The protein operates within isoprenoid biosynthesis; isopentenyl diphosphate biosynthesis via DXP pathway; isopentenyl diphosphate from 1-deoxy-D-xylulose 5-phosphate: step 1/6. Catalyzes the NADPH-dependent rearrangement and reduction of 1-deoxy-D-xylulose-5-phosphate (DXP) to 2-C-methyl-D-erythritol 4-phosphate (MEP). In Lachnospira eligens (strain ATCC 27750 / DSM 3376 / VPI C15-48 / C15-B4) (Eubacterium eligens), this protein is 1-deoxy-D-xylulose 5-phosphate reductoisomerase.